The sequence spans 447 residues: Phosphoglucosamine mutase (447 aa).

The active-site Phosphoserine intermediate is serine 102. Residues serine 102, aspartate 241, aspartate 243, and aspartate 245 each coordinate Mg(2+). Serine 102 carries the phosphoserine modification.

This sequence belongs to the phosphohexose mutase family. Mg(2+) serves as cofactor. In terms of processing, activated by phosphorylation.

It carries out the reaction alpha-D-glucosamine 1-phosphate = D-glucosamine 6-phosphate. Its function is as follows. Catalyzes the conversion of glucosamine-6-phosphate to glucosamine-1-phosphate. The polypeptide is Phosphoglucosamine mutase (Symbiobacterium thermophilum (strain DSM 24528 / JCM 14929 / IAM 14863 / T)).